An 875-amino-acid polypeptide reads, in one-letter code: Valine--tRNA ligase (875 aa).

Residues 41–51 carry the 'HIGH' region motif; the sequence is PNVTGSLHMGH. The 'KMSKS' region motif lies at 525-529; that stretch reads KMSKS. ATP is bound at residue Lys528. A coiled-coil region spans residues 810–875; it reads VDLELIKKNL…ERISITIKGL (66 aa).

This sequence belongs to the class-I aminoacyl-tRNA synthetase family. ValS type 1 subfamily. Monomer.

Its subcellular location is the cytoplasm. The catalysed reaction is tRNA(Val) + L-valine + ATP = L-valyl-tRNA(Val) + AMP + diphosphate. Its function is as follows. Catalyzes the attachment of valine to tRNA(Val). As ValRS can inadvertently accommodate and process structurally similar amino acids such as threonine, to avoid such errors, it has a 'posttransfer' editing activity that hydrolyzes mischarged Thr-tRNA(Val) in a tRNA-dependent manner. The chain is Valine--tRNA ligase from Pelagibacter ubique (strain HTCC1062).